The sequence spans 704 residues: Glycine--tRNA ligase beta subunit (704 aa).

Belongs to the class-II aminoacyl-tRNA synthetase family. As to quaternary structure, tetramer of two alpha and two beta subunits.

The protein localises to the cytoplasm. It carries out the reaction tRNA(Gly) + glycine + ATP = glycyl-tRNA(Gly) + AMP + diphosphate. In Delftia acidovorans (strain DSM 14801 / SPH-1), this protein is Glycine--tRNA ligase beta subunit.